The primary structure comprises 274 residues: Orotidine 5'-phosphate decarboxylase (274 aa).

Lys-95 functions as the Proton donor in the catalytic mechanism.

The protein belongs to the OMP decarboxylase family. Type 2 subfamily.

It catalyses the reaction orotidine 5'-phosphate + H(+) = UMP + CO2. It participates in pyrimidine metabolism; UMP biosynthesis via de novo pathway; UMP from orotate: step 2/2. This chain is Orotidine 5'-phosphate decarboxylase, found in Verminephrobacter eiseniae (strain EF01-2).